The primary structure comprises 376 residues: 2-aminoethylphosphonate--pyruvate transaminase 2 (376 aa).

An N6-(pyridoxal phosphate)lysine modification is found at K194.

The protein belongs to the class-V pyridoxal-phosphate-dependent aminotransferase family. PhnW subfamily. As to quaternary structure, homodimer. The cofactor is pyridoxal 5'-phosphate.

The catalysed reaction is (2-aminoethyl)phosphonate + pyruvate = phosphonoacetaldehyde + L-alanine. In terms of biological role, involved in phosphonate degradation. The sequence is that of 2-aminoethylphosphonate--pyruvate transaminase 2 from Burkholderia lata (strain ATCC 17760 / DSM 23089 / LMG 22485 / NCIMB 9086 / R18194 / 383).